We begin with the raw amino-acid sequence, 258 residues long: UPF0246 protein YaaA (258 aa).

This sequence belongs to the UPF0246 family.

This is UPF0246 protein YaaA from Escherichia coli O8 (strain IAI1).